Consider the following 430-residue polypeptide: Chaperone SurA (430 aa).

The N-terminal stretch at 1–25 (MQIIKTTIATFTAIAFTGAASFTSA) is a signal peptide. 2 consecutive PpiC domains span residues 176–277 (SPDY…KLYE) and 286–385 (VNQT…KVEE).

It is found in the periplasm. The catalysed reaction is [protein]-peptidylproline (omega=180) = [protein]-peptidylproline (omega=0). In terms of biological role, chaperone involved in the correct folding and assembly of outer membrane proteins. Recognizes specific patterns of aromatic residues and the orientation of their side chains, which are found more frequently in integral outer membrane proteins. May act in both early periplasmic and late outer membrane-associated steps of protein maturation. This chain is Chaperone SurA, found in Saccharophagus degradans (strain 2-40 / ATCC 43961 / DSM 17024).